The sequence spans 172 residues: Disulfide bond formation protein B (172 aa).

Over 1-11 (MNPFRWGFRAQ) the chain is Cytoplasmic. The chain crosses the membrane as a helical span at residues 12–28 (FLLGFLACAGLLAYAIY). At 29 to 46 (VQLHLGLEPCPLCIFQRI) the chain is on the periplasmic side. Cys38 and Cys41 are disulfide-bonded. Residues 47-63 (AFATLALLFLLGALHGP) form a helical membrane-spanning segment. Residues 64–70 (RGAGGRK) are Cytoplasmic-facing. Residues 71–88 (AYGVLAFIAAGVGMGIAA) form a helical membrane-spanning segment. The Periplasmic segment spans residues 89 to 145 (RHVWVQIRPKDMMSSCGPPLSFLSETMGPFEVFRTVLTGTGDCGNIDWRFLGLSMPM). Cys104 and Cys131 form a disulfide bridge. A helical transmembrane segment spans residues 146–164 (WSMVWFVGLALWALYAGFK). At 165 to 172 (HRGPRKLF) the chain is on the cytoplasmic side.

The protein belongs to the DsbB family.

It is found in the cell inner membrane. Functionally, required for disulfide bond formation in some periplasmic proteins. Acts by oxidizing the DsbA protein. This is Disulfide bond formation protein B from Xanthomonas campestris pv. campestris (strain 8004).